We begin with the raw amino-acid sequence, 132 residues long: uncharacterized protein (132 aa).

This is an uncharacterized protein from Methanocaldococcus jannaschii (strain ATCC 43067 / DSM 2661 / JAL-1 / JCM 10045 / NBRC 100440) (Methanococcus jannaschii).